A 194-amino-acid chain; its full sequence is dITP/XTP pyrophosphatase (194 aa).

Residue 8-13 (TGNPGK) participates in substrate binding. Positions 38 and 67 each coordinate Mg(2+). D67 (proton acceptor) is an active-site residue. Substrate-binding positions include S68, 146–149 (FGYD), K169, and 174–175 (HR).

This sequence belongs to the HAM1 NTPase family. As to quaternary structure, homodimer. The cofactor is Mg(2+).

It catalyses the reaction XTP + H2O = XMP + diphosphate + H(+). The enzyme catalyses dITP + H2O = dIMP + diphosphate + H(+). It carries out the reaction ITP + H2O = IMP + diphosphate + H(+). In terms of biological role, pyrophosphatase that catalyzes the hydrolysis of nucleoside triphosphates to their monophosphate derivatives, with a high preference for the non-canonical purine nucleotides XTP (xanthosine triphosphate), dITP (deoxyinosine triphosphate) and ITP. Seems to function as a house-cleaning enzyme that removes non-canonical purine nucleotides from the nucleotide pool, thus preventing their incorporation into DNA/RNA and avoiding chromosomal lesions. The sequence is that of dITP/XTP pyrophosphatase from Synechocystis sp. (strain ATCC 27184 / PCC 6803 / Kazusa).